A 474-amino-acid chain; its full sequence is tRNA-2-methylthio-N(6)-dimethylallyladenosine synthase (474 aa).

Positions 21–138 (ERVYVETQGC…LPQMLARRRS (118 aa)) constitute an MTTase N-terminal domain. [4Fe-4S] cluster contacts are provided by Cys30, Cys67, Cys101, Cys175, Cys179, and Cys182. A Radical SAM core domain is found at 161 to 395 (RAEGPTAYVS…ARLHEQQSAA (235 aa)). One can recognise a TRAM domain in the interval 397-460 (RALLGTRQSV…THSLRGRVVS (64 aa)).

It belongs to the methylthiotransferase family. MiaB subfamily. As to quaternary structure, monomer. Requires [4Fe-4S] cluster as cofactor.

It localises to the cytoplasm. It catalyses the reaction N(6)-dimethylallyladenosine(37) in tRNA + (sulfur carrier)-SH + AH2 + 2 S-adenosyl-L-methionine = 2-methylsulfanyl-N(6)-dimethylallyladenosine(37) in tRNA + (sulfur carrier)-H + 5'-deoxyadenosine + L-methionine + A + S-adenosyl-L-homocysteine + 2 H(+). Its function is as follows. Catalyzes the methylthiolation of N6-(dimethylallyl)adenosine (i(6)A), leading to the formation of 2-methylthio-N6-(dimethylallyl)adenosine (ms(2)i(6)A) at position 37 in tRNAs that read codons beginning with uridine. This chain is tRNA-2-methylthio-N(6)-dimethylallyladenosine synthase, found in Halorhodospira halophila (strain DSM 244 / SL1) (Ectothiorhodospira halophila (strain DSM 244 / SL1)).